Consider the following 307-residue polypeptide: Probable thioesterase KK1J (307 aa).

This sequence belongs to the AMT4 thioesterase family.

It participates in secondary metabolite biosynthesis. Functionally, probable thioesterase; part of the gene cluster that mediates the biosynthesis of KK-1, a novel cyclic depsipeptide with 10 residues which is a promising active compound with high activity against many plant pathogens, especially Botrytis cinerea. Within the pathway, kk1J is not essential for the biosynthesis of KK-1, but plays a role for efficient production via correction of peptide chain synthesis by kk1B. The nonribosomal peptide synthetase (NRPS) kk1B catalyzes the elongation and cyclization of the decapeptide chain composed of 1 D-lactic acid residue (D-Lac), 1 pipecolic acid residue (Pip), 1 aspartic acid residue (Asp), 1 isoleucine residue (Ile), 1 glycine residue (Gly), 1 tyrosine residue (Tyr) and 4 valine residues (Val). The Asp, Ile and 3 Val residues are N-methylated by the 5 methyltransferase domains from the NRPS (found in modules 3, 5, 6, 7 and 9), whereas the Tyr residue is O-methylated by the cluster encoded O-methyltransferase kk1A. The thioesterase kk1J is likely to be involved in the corrective mechanism of peptide chain synthesis. The D-lactate dehydrogenase kk1H is involved in the synthesis of D-lactic acid from pyruvic acid, which is recognized by the A domain of the first kk1B module. The pyrroline-5-carboxylate reductase kk1I is involved in the synthesis of the L-pipecolic acid residue of KK-1 from delta-1-pyrroline-5-carboxylate (P5C), a metabolic intermediate of lysine. It still is unclear how kk1C and kk1D are involved in the production of KK-1. The protein is Probable thioesterase KK1J of Curvularia clavata.